The primary structure comprises 338 residues: Lipoate-protein ligase A (338 aa).

One can recognise a BPL/LPL catalytic domain in the interval 29–216; it reads PADQRVLFLW…AYCEHYQQQV (188 aa). ATP is bound by residues arginine 71, 76 to 79, and lysine 134; that span reads GAVF. Lysine 134 lines the (R)-lipoate pocket.

The protein belongs to the LplA family. As to quaternary structure, monomer.

The protein localises to the cytoplasm. The enzyme catalyses L-lysyl-[lipoyl-carrier protein] + (R)-lipoate + ATP = N(6)-[(R)-lipoyl]-L-lysyl-[lipoyl-carrier protein] + AMP + diphosphate + H(+). It participates in protein modification; protein lipoylation via exogenous pathway; protein N(6)-(lipoyl)lysine from lipoate: step 1/2. Its pathway is protein modification; protein lipoylation via exogenous pathway; protein N(6)-(lipoyl)lysine from lipoate: step 2/2. Catalyzes both the ATP-dependent activation of exogenously supplied lipoate to lipoyl-AMP and the transfer of the activated lipoyl onto the lipoyl domains of lipoate-dependent enzymes. The sequence is that of Lipoate-protein ligase A from Vibrio cholerae serotype O1 (strain ATCC 39541 / Classical Ogawa 395 / O395).